The sequence spans 1025 residues: Complement receptor type 2 (1025 aa).

The N-terminal stretch at 1-11 is a signal peptide; that stretch reads MLTWFLFYFSE. The Sushi 1 domain occupies 12–75; that stretch reads ISCDPPPEVK…WDKAPPICES (64 aa). Over 12–963 the chain is Extracellular; sequence ISCDPPPEVK…PLALCKYRRW (952 aa). 2 cysteine pairs are disulfide-bonded: Cys-14/Cys-56 and Cys-42/Cys-73. 2 N-linked (GlcNAc...) asparagine glycosylation sites follow: Asn-77 and Asn-113. Sushi domains follow at residues 80-140, 144-204, 205-265, 266-336, 341-400, 401-460, 461-516, 517-587, 592-651, 652-706, 707-771, 776-835, 839-899, and 900-960; these read ISCS…VCES, LECP…TCKE, AQCE…VCKE, ILCP…YCVL, VLCL…VCEK, GCQA…QCTV, AECK…LCKE, ITCP…LCKL, VQCT…LCKK, EGCE…VCTV, ILCQ…QCLQ, THCP…TCIR, LGCQ…FCKE, and VNCS…LCKY. 26 disulfides stabilise this stretch: Cys-82-Cys-124, Cys-110-Cys-138, Cys-146-Cys-189, Cys-175-Cys-202, Cys-207-Cys-248, Cys-234-Cys-263, Cys-268-Cys-317, Cys-297-Cys-334, Cys-343-Cys-385, Cys-371-Cys-398, Cys-402-Cys-445, Cys-431-Cys-458, Cys-463-Cys-501, Cys-487-Cys-514, Cys-519-Cys-568, Cys-548-Cys-585, Cys-594-Cys-636, Cys-622-Cys-649, Cys-654-Cys-689, Cys-675-Cys-704, Cys-709-Cys-752, Cys-738-Cys-769, Cys-778-Cys-820, Cys-806-Cys-833, Cys-841-Cys-884, and Cys-870-Cys-897. Residues Asn-276, Asn-316, Asn-364, and Asn-380 are each glycosylated (N-linked (GlcNAc...) asparagine). N-linked (GlcNAc...) asparagine glycosylation occurs at Asn-484. The N-linked (GlcNAc...) asparagine glycan is linked to Asn-527. 2 N-linked (GlcNAc...) asparagine glycosylation sites follow: Asn-615 and Asn-639. Asn-694 carries N-linked (GlcNAc...) asparagine glycosylation. N-linked (GlcNAc...) asparagine glycosylation is found at Asn-754, Asn-790, Asn-813, Asn-823, and Asn-851. A glycan (N-linked (GlcNAc...) asparagine) is linked at Asn-901. Intrachain disulfides connect Cys-902–Cys-945 and Cys-931–Cys-958. Residues 964–990 form a helical membrane-spanning segment; it reads STIPLICGISVGSALIILMSVGFCMIL. Residues 991-1025 are Cytoplasmic-facing; the sequence is KHRESNYYTKTRPKEGALHLETREVYSIDPYNPAS.

It belongs to the receptors of complement activation (RCA) family. In terms of assembly, interacts (via Sushi domain 1 and 2) with C3. Interacts with CD19. Part of a complex composed of CD19, CR2/CD21, CD81 and IFITM1/CD225 in the membrane of mature B-cells. Interacts (via Sushi domain 1 and 2) with FCER2 (via the C-terminus). Interacts with CD23. Interacts with FCRL5. Interacts with CR1. Interacts with INFNA1. B-lymphocytes.

It localises to the cell membrane. Serves as a receptor for various ligands including complement component CD3d, HNRNPU OR IFNA1. When C3d is bound to antigens, attaches to C3d on B-cell surface and thereby facilitates the recognition and uptake of antigens by B-cells. This interaction enhances B-cell activation and subsequent immune responses. Forms a complex with several partners on the surface of B-cells including CD19, FCRL5 and CD81, to form the B-cell coreceptor complex that plays a crucial role in B-cell activation and signaling. Also induces specific intracellular signaling separately from the BCR and CD19 by activating the tyrosine kinase SRC, which then phosphorylates nucleolin/NCL and triggers AKT and GSK3 kinase activities in a SYK/CD19-independent manner. Acts as a ligand for CD23 (FcepsilonRII), a low-affinity receptor for IgE, which is expressed on B-cells and other immune cells, and thus participates in the regulation of IgE production. This is Complement receptor type 2 (Cr2) from Mus musculus (Mouse).